The following is a 152-amino-acid chain: Ribosome maturation factor RimP (152 aa).

It belongs to the RimP family.

The protein localises to the cytoplasm. In terms of biological role, required for maturation of 30S ribosomal subunits. The polypeptide is Ribosome maturation factor RimP (Porphyromonas gingivalis (strain ATCC 33277 / DSM 20709 / CIP 103683 / JCM 12257 / NCTC 11834 / 2561)).